A 574-amino-acid chain; its full sequence is Sulfate adenylyltransferase (574 aa).

Residues M1 to Y169 are N-terminal. The tract at residues D170 to T394 is catalytic. Sulfate is bound at residue Q197. ATP-binding positions include Q197–N200 and G291–H294. Residues T198, R199, and N200 contribute to the active site. R199 serves as a coordination point for sulfate. A295 lines the sulfate pocket. V333 serves as a coordination point for ATP. The allosteric regulation domain; adenylyl-sulfate kinase-like stretch occupies residues Q395–S574. 3'-phosphoadenylyl sulfate contacts are provided by residues D434 to R437, R451, I477 to A478, and R516.

It in the N-terminal section; belongs to the sulfate adenylyltransferase family. In the C-terminal section; belongs to the APS kinase family. In terms of assembly, homohexamer. Dimer of trimers.

Its subcellular location is the cytoplasm. The enzyme catalyses sulfate + ATP + H(+) = adenosine 5'-phosphosulfate + diphosphate. The protein operates within sulfur metabolism; hydrogen sulfide biosynthesis; sulfite from sulfate: step 1/3. Allosterically inhibited by 3'-phosphoadenosine 5'-phosphosulfate (PAPS). Catalyzes the first intracellular reaction of sulfate assimilation, forming adenosine-5'-phosphosulfate (APS) from inorganic sulfate and ATP. Plays an important role in sulfate activation as a component of the biosynthesis pathway of sulfur-containing amino acids. The chain is Sulfate adenylyltransferase from Neosartorya fischeri (strain ATCC 1020 / DSM 3700 / CBS 544.65 / FGSC A1164 / JCM 1740 / NRRL 181 / WB 181) (Aspergillus fischerianus).